A 173-amino-acid polypeptide reads, in one-letter code: tRNA-specific adenosine deaminase (173 aa).

The CMP/dCMP-type deaminase domain occupies 9–121 (EFDEKMMRYA…DYKTGAIGSR (113 aa)). Zn(2+) is bound at residue histidine 61. The active-site Proton donor is glutamate 63. Residues cysteine 91 and cysteine 94 each contribute to the Zn(2+) site.

It belongs to the cytidine and deoxycytidylate deaminase family. In terms of assembly, homodimer. The cofactor is Zn(2+).

It carries out the reaction adenosine(34) in tRNA + H2O + H(+) = inosine(34) in tRNA + NH4(+). Its function is as follows. Catalyzes the deamination of adenosine to inosine at the wobble position 34 of tRNA(Arg2). This chain is tRNA-specific adenosine deaminase, found in Haemophilus influenzae (strain ATCC 51907 / DSM 11121 / KW20 / Rd).